We begin with the raw amino-acid sequence, 588 residues long: MNNSINHKFHHISRAEYQELLAVSRGDAVADYLIDNVSILDLINGGEISGPIVIKGRYIAGVGAEYADAPALQRIDARGATAVPGFIDAHLHIESSMMTPVTFETATLPRGLTTVICDPHEIVNVMGEAGFAWFARCAEQARQNQYLQVSSCVPALEGCDVNGASFTLEQMLAWRDHPQVTGLAEMMDYPGVISGQNALLDKLDAFRHLTLDGHCPGLGGKELNAYITAGIENCHESYQLEEGRRKLQLGMSLMIREGSAARNLNALAPLINEFNSPQCMLCTDDRNPWEIAHEGHIDALIRRLIEQHNVPLHVAYRVASWSTARHFGLNHLGLLAPGKQADIVLLSDARKVTVQQVLVKGEPIDAQTLQAEESARLAQSAPPYGNTIARQPVSASDFALQFTPGKRYRVIDVIHNELITHSHSSVYSENGFDRDDVSFIAVLERYGQRLAPACGLLGGFGLNEGALAATVSHDSHNIVVIGRSAEEMALAVNQVIQDGGGLCVVRNGQVQSHLPLPIAGLMSTDTAQSLAEQIDALKAAARECGPLPDEPFIQMAFLSLPVIPALKLTSQGLFDGEKFAFTTLEVTE.

The protein belongs to the metallo-dependent hydrolases superfamily. Adenine deaminase family. Homodimer. The cofactor is Mn(2+).

The catalysed reaction is adenine + H2O + H(+) = hypoxanthine + NH4(+). The protein is Adenine deaminase of Escherichia coli O9:H4 (strain HS).